A 103-amino-acid chain; its full sequence is Large ribosomal subunit protein bL21 (103 aa).

It belongs to the bacterial ribosomal protein bL21 family. As to quaternary structure, part of the 50S ribosomal subunit. Contacts protein L20.

In terms of biological role, this protein binds to 23S rRNA in the presence of protein L20. In Hamiltonella defensa subsp. Acyrthosiphon pisum (strain 5AT), this protein is Large ribosomal subunit protein bL21.